A 1240-amino-acid polypeptide reads, in one-letter code: ATP-dependent helicase/nuclease subunit A (1240 aa).

The 474-residue stretch at 12 to 485 folds into the UvrD-like helicase ATP-binding domain; it reads SQWTDDQWKA…IDLAKNFRSR (474 aa). An ATP-binding site is contributed by 33–40; it reads AAAGSGKT. The 308-residue stretch at 497 to 804 folds into the UvrD-like helicase C-terminal domain; it reads KQIMGEEVGE…RIMTIHKSKG (308 aa).

It belongs to the helicase family. AddA subfamily. Heterodimer of AddA and AddB/RexB. Mg(2+) is required as a cofactor.

The enzyme catalyses Couples ATP hydrolysis with the unwinding of duplex DNA by translocating in the 3'-5' direction.. It carries out the reaction ATP + H2O = ADP + phosphate + H(+). In terms of biological role, the heterodimer acts as both an ATP-dependent DNA helicase and an ATP-dependent, dual-direction single-stranded exonuclease. Recognizes the chi site generating a DNA molecule suitable for the initiation of homologous recombination. The AddA nuclease domain is required for chi fragment generation; this subunit has the helicase and 3' -&gt; 5' nuclease activities. The chain is ATP-dependent helicase/nuclease subunit A from Bacillus cereus (strain AH820).